The chain runs to 201 residues: MARYTGPVTRKSRRLRTDLVGGDQAFEKRPYPPGQHGRARIKESEYLLQLQEKQKARFTYGVMEKQFRRYYEEAVRQPGKTGEELLRILESRLDNVVYRAGLARTRRMARQLVTHGHFTVNGVRVDVPSYRVSQYDIIDVREQSLNSVPFQIARETAGDRPVPSWLQVVGERQRILIHQLPERAQIDVPLTEQLIVEFYSK.

Positions 91–157 constitute an S4 RNA-binding domain; it reads SRLDNVVYRA…VPFQIARETA (67 aa).

This sequence belongs to the universal ribosomal protein uS4 family. In terms of assembly, part of the 30S ribosomal subunit. Contacts protein S5. The interaction surface between S4 and S5 is involved in control of translational fidelity.

In terms of biological role, one of the primary rRNA binding proteins, it binds directly to 16S rRNA where it nucleates assembly of the body of the 30S subunit. Functionally, with S5 and S12 plays an important role in translational accuracy. The chain is Small ribosomal subunit protein uS4 from Mycolicibacterium paratuberculosis (strain ATCC BAA-968 / K-10) (Mycobacterium paratuberculosis).